Consider the following 140-residue polypeptide: Small ribosomal subunit protein uS12 (140 aa).

A Hydroxyproline modification is found at proline 59.

The protein belongs to the universal ribosomal protein uS12 family.

The sequence is that of Small ribosomal subunit protein uS12 (RPS23) from Encephalitozoon cuniculi (strain GB-M1) (Microsporidian parasite).